The primary structure comprises 1268 residues: MSSVAVLTQESFAEHRSGLVPQQIIVATLNSEEESDPPTYKDAFPPLPEKAACLESAQEPAGAWSNKIRPIKASVITQVFHVPLEERKYKDMNQFGEGEQAKICLEIMQRTGAHLELSLAKDQGLSIMVSGKLDAVMKARKDIVARLQTQASATVPIPKEHHRFVIGKNGEKLQDLELKTATKIQIPRPDDPSNQIKITGTKEGIEKARHEVLLISAEQDKRAVKRLEVEKAFHPFIAGPYNRLVGEIMQETGTRINIPPPSVNRTEIVFTGEKEQLAQAVARIKKIYEEKKKKTTTIAVEVKKSQHKYVIGPKGNSLQEILERTGVSVEIPPSDSISETVILRGEPEKLGQALTEVYAKANSFTVSSVSAPSWLHRFIIGKKGQNLAKITHQMPKVHIEFTEGEDKITLEGPTEDVNVAQEQIEGMVKDLINRMDYVEINIDHKFHRHLIGKSGANINRIKDQYKVSVRIPPDSEKSNLIRIEGDPQGVQQAKRELLELASRMENERTKDLIIEQRFHRTIIGQKGERIREIRDKFPEVIINFPDPAQKSEIVQLRGPKNEVEKCTKYMQKMVADLVENSYSISVPIFKQFHKNIIGKGGANIKKIREESNTKIDLPAENSNSETIVITGKRANCEAARSRILSIQKDLANIAEVEVSIPAKLHNSLIGTKGRLIRSIMEECGGVHIHFPVEGSGSDTVVIRGPSSDVEKAKKQLLHLAEEKQTKSFTVDIRAKPEYHKFLIGKGGGKIRKVRDSTGARIIFPAAEDKDQDLITIIGKEDAVREAQKELEALIQNLDNVVEDYMLVDPRHHRHFVIRRGQVLREIAEEYGGVMVSFPRSGTQSDKVTLKGAKDCVEAAKKRIQEIIEDLEAQVTLECAIPQKFHRSVMGPKGSRIQQITRDYNVQIKFPDREENPVHSVEPSIQENGDEAGEGREAKETDPGSPRRCDIIVISGRKEKCEAAKEALEALVPVTIEVEVPFDLHRYIIGQKGSGIRKMMDEFEVNIHVPAPELQSHTIAITGLAANLDRAKAGLLDRVKELQAEQEDRALRSFKLSVTVDPKYHPKIIGGKGAVITQIRLEHDVNIQFPDKDDGNQPQDQITITGYEKNTEAARDAILKIVGELEQMVSEDVPLDHRVHARIIGARGKAIRKIMDEFKVDIRFPQSGAPDPNCVTVTGLPENVEEAIDHILNLEEEYLADVVDSEALQVYMKPPAHEESKAPSKGFVVRDAPWTSNSSEKAPDMSSSEEIPTFGAQVAPKTLPWGPKR.

An N-acetylserine modification is found at Ser-2. Thr-8 carries the post-translational modification Phosphothreonine. Ser-11, Ser-31, and Ser-35 each carry phosphoserine. 7 consecutive KH domains span residues 150–212, 222–284, 295–357, 364–424, 435–497, 507–570, and 581–643; these read QASA…RHEV, RAVK…VARI, TTTI…LTEV, FTVS…QEQI, MDYV…KREL, ERTK…TKYM, and SYSI…RSRI. Phosphothreonine occurs at positions 295 and 296. Ser-317 carries the phosphoserine modification. Tyr-437 carries the phosphotyrosine modification. At Ser-645 the chain carries Phosphoserine. KH domains lie at 653 to 716, 727 to 790, 800 to 863, 873 to 967, 972 to 1034, 1052 to 1117, and 1127 to 1190; these read IAEV…KKQL, SFTV…QKEL, VVED…KKRI, QVTL…KEAL, PVTI…KAGL, SFKL…RDAI, and MVSE…IDHI. Positions 910-946 are disordered; sequence PDREENPVHSVEPSIQENGDEAGEGREAKETDPGSPR. Residues 932–946 show a composition bias toward basic and acidic residues; sequence GEGREAKETDPGSPR. An N6-acetyllysine modification is found at Lys-991. Positions 1214–1268 are disordered; sequence PAHEESKAPSKGFVVRDAPWTSNSSEKAPDMSSSEEIPTFGAQVAPKTLPWGPKR. The segment covering 1233–1249 has biased composition (polar residues); that stretch reads WTSNSSEKAPDMSSSEE. Ser-1247 is modified (phosphoserine).

It is found in the cytoplasm. The protein resides in the nucleus. In terms of biological role, appears to play a role in cell sterol metabolism. It may function to protect cells from over-accumulation of cholesterol. The polypeptide is Vigilin (Hdlbp) (Rattus norvegicus (Rat)).